Here is a 372-residue protein sequence, read N- to C-terminus: Riboflavin biosynthesis protein RibD (372 aa).

The tract at residues M1–G150 is deaminase. The CMP/dCMP-type deaminase domain occupies S6 to T128. H55 lines the Zn(2+) pocket. E57 serves as the catalytic Proton donor. The Zn(2+) site is built by C80 and C89. The segment at M151–V372 is reductase. NADP(+)-binding positions include A159 and T166–A169. S173 provides a ligand contact to substrate. An NADP(+)-binding site is contributed by W175. Position 189 (R189) interacts with substrate. The NADP(+) site is built by T201 and D205. Residues L209 and R212 each coordinate substrate. S239 is a binding site for NADP(+). Position 302 (E302) interacts with substrate. G304–S310 provides a ligand contact to NADP(+).

The protein in the N-terminal section; belongs to the cytidine and deoxycytidylate deaminase family. This sequence in the C-terminal section; belongs to the HTP reductase family. The cofactor is Zn(2+).

The enzyme catalyses 2,5-diamino-6-hydroxy-4-(5-phosphoribosylamino)-pyrimidine + H2O + H(+) = 5-amino-6-(5-phospho-D-ribosylamino)uracil + NH4(+). The catalysed reaction is 5-amino-6-(5-phospho-D-ribitylamino)uracil + NADP(+) = 5-amino-6-(5-phospho-D-ribosylamino)uracil + NADPH + H(+). Its pathway is cofactor biosynthesis; riboflavin biosynthesis; 5-amino-6-(D-ribitylamino)uracil from GTP: step 2/4. It functions in the pathway cofactor biosynthesis; riboflavin biosynthesis; 5-amino-6-(D-ribitylamino)uracil from GTP: step 3/4. Functionally, converts 2,5-diamino-6-(ribosylamino)-4(3h)-pyrimidinone 5'-phosphate into 5-amino-6-(ribosylamino)-2,4(1h,3h)-pyrimidinedione 5'-phosphate. The protein is Riboflavin biosynthesis protein RibD (ribD) of Haemophilus influenzae (strain ATCC 51907 / DSM 11121 / KW20 / Rd).